The following is a 154-amino-acid chain: Superoxide dismutase [Cu-Zn] (154 aa).

Residues His-47, His-49, and His-64 each contribute to the Cu cation site. Cys-58 and Cys-147 form a disulfide bridge. His-64, His-72, His-81, and Asp-84 together coordinate Zn(2+). His-121 provides a ligand contact to Cu cation. Substrate is bound at residue Arg-144.

Belongs to the Cu-Zn superoxide dismutase family. Homodimer. The cofactor is Cu cation. Zn(2+) serves as cofactor.

The protein localises to the cytoplasm. The enzyme catalyses 2 superoxide + 2 H(+) = H2O2 + O2. Its function is as follows. Destroys radicals which are normally produced within the cells and which are toxic to biological systems. The polypeptide is Superoxide dismutase [Cu-Zn] (SOD1) (Eremothecium gossypii (strain ATCC 10895 / CBS 109.51 / FGSC 9923 / NRRL Y-1056) (Yeast)).